The following is a 729-amino-acid chain: Glutamine synthetase (729 aa).

Positions 85–174 (THYTHWFQPL…IPTIFISYTG (90 aa)) constitute a GS beta-grasp domain. In terms of domain architecture, GS catalytic spans 179–615 (YKTPLLKALA…VLGDLAINHI (437 aa)). 4 residues coordinate Mg(2+): Glu215, Glu217, Glu286, and Glu293. L-glutamate contacts are provided by residues 337-338 (NG) and Gly338. Position 342 (His342) interacts with Mg(2+). The ATP site is built by Ser346 and Arg458. Arg458 lines the L-glutamate pocket.

The protein belongs to the glutamine synthetase family. As to quaternary structure, homohexamer. Mg(2+) is required as a cofactor.

The protein localises to the cytoplasm. The enzyme catalyses L-glutamate + NH4(+) + ATP = L-glutamine + ADP + phosphate + H(+). Inhibited by L-histidine (46%), L-arginine (38%) and L-methionine-DL-sulphoximine. The activity of this enzyme is not controlled by adenylation. Its function is as follows. Catalyzes the ATP-dependent biosynthesis of glutamine from glutamate and ammonia. The sequence is that of Glutamine synthetase from Bacteroides fragilis (strain YCH46).